Consider the following 141-residue polypeptide: Small ribosomal subunit protein uS8 (141 aa).

Belongs to the universal ribosomal protein uS8 family. In terms of assembly, part of the 30S ribosomal subunit. Contacts proteins S5 and S12.

Functionally, one of the primary rRNA binding proteins, it binds directly to 16S rRNA central domain where it helps coordinate assembly of the platform of the 30S subunit. This Mycoplasma genitalium (strain ATCC 33530 / DSM 19775 / NCTC 10195 / G37) (Mycoplasmoides genitalium) protein is Small ribosomal subunit protein uS8.